A 358-amino-acid chain; its full sequence is RuBisCO accumulation factor 1 (358 aa).

The tract at residues 11–194 (VSAAEAAELI…RQAIEKLLTD (184 aa)) is N-terminal alpha-helix. Residues 218–344 (ARLIPVAGTF…VVLVLRPKKI (127 aa)) are C-terminal beta-sheet.

Belongs to the RAF family. As to quaternary structure, homodimer. Forms an RbcL(8)-Raf1(8) complex. Forms complexes of many stoichiometries with RbcL with and without RbcS. RbcX and Raf1 can bind simultaneously to RbcL. Interacts with both RuBisCO subunits (ccbL, ccbS), GroEL, DnaK and alpha and beta phycocyanin (cpcA, cpcB) in pull-down experiments with tagged protein. C-terminally tagged Raf1 does not interact with either RuBisCO subunit, suggesting its C-terminus is involved in binding.

It localises to the cytoplasm. In terms of biological role, a major RuBisCO chaperone. Acts after GroEL-GroES chaperonin to fold and/or assemble the large subunit of RuBisCO (ccbL, rbcL). Cooperates with RbcX in RbcL folding, plays the major role in assembly of dimers into RbcL(8)-Raf1(8) intermediate complexes. RbcS replaces Raf1, leading to holoenzyme formation. Required for optimal reconstitution of RbcL(8) upon expression in E.coli. Has been suggested to be involved in RuBisCO recycling and homeostasis rather than assembly. The chain is RuBisCO accumulation factor 1 from Synechocystis sp. (strain ATCC 27184 / PCC 6803 / Kazusa).